The following is a 246-amino-acid chain: Adenylate kinase 4 (246 aa).

Ala2 is modified (N-acetylalanine). 43-48 provides a ligand contact to ATP; it reads GSGKGT. Positions 63-92 are NMP; it reads STGDMLRAAVASKTPLGVKAKEAMEKGELV. Residues Thr64, Arg69, 90–92, 118–121, and Gln125 each bind AMP; these read ELV and GFPR. The segment at 159 to 196 is LID; the sequence is GRWIHPSSGRSYHTKFAPPKTPGVDDITGEPLIQRKDD. Position 160 (Arg160) interacts with ATP. 2 residues coordinate AMP: Arg193 and Arg204.

Belongs to the adenylate kinase family. In terms of assembly, monomer.

The protein localises to the cytoplasm. The catalysed reaction is AMP + ATP = 2 ADP. Catalyzes the reversible transfer of the terminal phosphate group between ATP and AMP. Plays an important role in cellular energy homeostasis and in adenine nucleotide metabolism. This chain is Adenylate kinase 4 (ADK1), found in Arabidopsis thaliana (Mouse-ear cress).